The following is a 387-amino-acid chain: Protein adenylyltransferase VopS (387 aa).

ATP contacts are provided by residues Ile-76–Thr-77, Leu-122–Ser-124, Gly-353–Gly-355, and Arg-359. In terms of domain architecture, Fido spans Leu-278 to Lys-387.

It is found in the secreted. It carries out the reaction L-tyrosyl-[protein] + ATP = O-(5'-adenylyl)-L-tyrosyl-[protein] + diphosphate. It catalyses the reaction L-threonyl-[protein] + ATP = 3-O-(5'-adenylyl)-L-threonyl-[protein] + diphosphate. Adenylyltransferase involved in virulence by mediating the addition of adenosine 5'-monophosphate (AMP) to specific threonine residue of host Rho GTPases RhoA, Rac and Cdc42. The resulting AMPylation prevents the interaction of Rho GTPases with downstream effectors, thereby inhibiting actin assembly in infected cells. This is Protein adenylyltransferase VopS (vopS) from Vibrio parahaemolyticus serotype O3:K6 (strain RIMD 2210633).